The following is a 502-amino-acid chain: Cytochrome P450 monooxygenase AacuE (502 aa).

Residues 4-26 (AITGLVATVTTFLAYIVFLSYTP) form a helical membrane-spanning segment. Residue N393 is glycosylated (N-linked (GlcNAc...) asparagine). C439 contributes to the heme binding site.

It belongs to the cytochrome P450 family. Heme is required as a cofactor.

The protein resides in the membrane. Its pathway is secondary metabolite biosynthesis. In terms of biological role, cytochrome P450 monooxygenase; part of the gene cluster that mediates the biosynthesis of the tetrahydroxanthone dimer secalonic acid D. The pathway begins with the synthesis of atrochrysone thioester by the polyketide synthase AacuL. The atrochrysone carboxyl ACP thioesterase AacuM then breaks the thioester bond and releases the atrochrysone carboxylic acid from AacuL. Atrochrysone carboxylic acid is decarboxylated by the decarboxylase AacuI, and oxidized by the anthrone oxygenase AacuG to yield emodin. Emodin is then reduced to emodin hydroquinone by a yet unidentified oxidoreductase. A-ring reduction by the short chain dehydrogenase AacuN, dehydration by the scytalone dehydratase-like protein AacuK and probable spontaneous re-oxidation, results in overall deoxygenation to chrysophanol. Baeyer-Villiger oxidation by the Baeyer-Villiger monooxygenase (BVMO) AacuH then yields monodictyphenone. Monodictyphenone is transformed into compounds with the tetrahydroxanthone skeleton via methylesterification by the methyltransferase AacuQ, followed by the action of the flavin-dependent monooxygenase AacuC, the isomerase AacuP, and the short chain dehydrogenase/reductase AacuF or AacuD. AacuF and AacuD should accept the same compound as a substrate but perform the ketoreduction with a different stereoselectivity, thus yielding blennolides B and A, respectively. In the final step of the biosynthesis, the cytochrome P450 monooxygenase AacuE accepts blennolide B and/or blennolide A to conduct the dimerization reaction to furnish the tetrahydroxanthone dimers, secalonic acids D, B, and F. The chain is Cytochrome P450 monooxygenase AacuE from Aspergillus aculeatus (strain ATCC 16872 / CBS 172.66 / WB 5094).